A 183-amino-acid chain; its full sequence is Casparian strip membrane protein 2 (183 aa).

Residues 1–23 lie on the Cytoplasmic side of the membrane; that stretch reads MDSGEQGETSKAPLNKGVSRGVS. A helical membrane pass occupies residues 24–44; the sequence is ILDLILRVIAVISTLASAIAM. Topologically, residues 45-71 are extracellular; it reads GTTNETLPLFTPFIQFKARYSDLPALT. The N-linked (GlcNAc...) asparagine glycan is linked to N48. A helical transmembrane segment spans residues 72 to 92; that stretch reads FFVVANSIVSAYLILSLPLSI. Topologically, residues 93–104 are cytoplasmic; it reads AHIIRSGAKYSR. The helical transmembrane segment at 105 to 125 threads the bilayer; the sequence is LVLIIFDAAMLALVTAASSAA. Residues 126–158 lie on the Extracellular side of the membrane; the sequence is TAIVYLAHKGNVRANWLAICQQLDSFCERTSGS. The chain crosses the membrane as a helical span at residues 159-179; the sequence is LVGSFGAMVLLILLILLSAMA. Over 180-183 the chain is Cytoplasmic; sequence LARR.

This sequence belongs to the Casparian strip membrane proteins (CASP) family. In terms of assembly, homodimer and heterodimers.

The protein resides in the cell membrane. Its function is as follows. Regulates membrane-cell wall junctions and localized cell wall deposition. Required for establishment of the Casparian strip membrane domain (CSD) and the subsequent formation of Casparian strips, a cell wall modification of the root endodermis that determines an apoplastic barrier between the intraorganismal apoplasm and the extraorganismal apoplasm and prevents lateral diffusion. The protein is Casparian strip membrane protein 2 of Triticum aestivum (Wheat).